A 346-amino-acid polypeptide reads, in one-letter code: Heat-inducible transcription repressor HrcA (346 aa).

This sequence belongs to the HrcA family.

Functionally, negative regulator of class I heat shock genes (grpE-dnaK-dnaJ and groELS operons). Prevents heat-shock induction of these operons. This is Heat-inducible transcription repressor HrcA from Erythrobacter litoralis (strain HTCC2594).